The sequence spans 130 residues: MGIVGVGIDLVSIPDFAEQVSQPGTVFMTIFTPGERRDASVKSSSAVCHLAARWAVKEAVIKAWSGSRFAQRPMLPENIHRDIEVVNDMWGRPRVRLTGAIAKHLTDVTIHVSLTHEGDIAAAVVILEVL.

Residues aspartate 9 and glutamate 58 each coordinate Mg(2+).

The protein belongs to the P-Pant transferase superfamily. AcpS family. Mg(2+) serves as cofactor.

It localises to the cytoplasm. The catalysed reaction is apo-[ACP] + CoA = holo-[ACP] + adenosine 3',5'-bisphosphate + H(+). Functionally, transfers the 4'-phosphopantetheine moiety from coenzyme A to a Ser of acyl-carrier-protein. This chain is Holo-[acyl-carrier-protein] synthase, found in Mycobacterium leprae (strain Br4923).